A 100-amino-acid chain; its full sequence is Large ribosomal subunit protein bL27 (100 aa).

The propeptide occupies 1–9; it reads MLSINLSLC.

Belongs to the bacterial ribosomal protein bL27 family. Post-translationally, the N-terminus is cleaved by ribosomal processing cysteine protease Prp.

This chain is Large ribosomal subunit protein bL27, found in Clostridium acetobutylicum (strain ATCC 824 / DSM 792 / JCM 1419 / IAM 19013 / LMG 5710 / NBRC 13948 / NRRL B-527 / VKM B-1787 / 2291 / W).